An 82-amino-acid chain; its full sequence is Acyl carrier protein (82 aa).

The region spanning 4 to 79 is the Carrier domain; sequence PEMESRLKKI…DALNYIEQKL (76 aa). O-(pantetheine 4'-phosphoryl)serine is present on S39.

It belongs to the acyl carrier protein (ACP) family. 4'-phosphopantetheine is transferred from CoA to a specific serine of apo-ACP by AcpS. This modification is essential for activity because fatty acids are bound in thioester linkage to the sulfhydryl of the prosthetic group.

The protein localises to the cytoplasm. Its pathway is lipid metabolism; fatty acid biosynthesis. In terms of biological role, carrier of the growing fatty acid chain in fatty acid biosynthesis. This is Acyl carrier protein from Roseiflexus sp. (strain RS-1).